A 94-amino-acid polypeptide reads, in one-letter code: FXYD domain-containing ion transport regulator 6 (94 aa).

Residues M1–A17 form the signal peptide. The Extracellular portion of the chain corresponds to S18 to Q34. A helical membrane pass occupies residues T35–S57. Residues R58 to N94 lie on the Cytoplasmic side of the membrane.

It belongs to the FXYD family. As to quaternary structure, regulatory subunit of the sodium/potassium-transporting ATPase which is composed of a catalytic alpha subunit, a non-catalytic beta subunit and an additional regulatory subunit. The regulatory subunit, a member of the FXYD protein family, modulates the enzymatic activity in a tissue- and isoform-specific way by changing affinities of the Na+/K+-ATPase toward Na(+), K(+) or ATP.

Its subcellular location is the cell membrane. Functionally, associates with and regulates the activity of the sodium/potassium-transporting ATPase (NKA) which catalyzes the hydrolysis of ATP coupled with the exchange of Na(+) and K(+) ions across the plasma membrane. Reduces the apparent affinity for intracellular Na(+) with no change in the apparent affinity for extracellular K(+). In addition to modulating NKA kinetics, may also function as a regulator of NKA localization to the plasma membrane. In Mus musculus (Mouse), this protein is FXYD domain-containing ion transport regulator 6 (Fxyd6).